The primary structure comprises 635 residues: 1-deoxy-D-xylulose-5-phosphate synthase (635 aa).

Thiamine diphosphate contacts are provided by residues histidine 78 and 119–121 (GHA). Aspartate 151 contacts Mg(2+). Thiamine diphosphate is bound by residues 152 to 153 (GA), asparagine 180, and tyrosine 291. Asparagine 180 contacts Mg(2+). The tract at residues 305 to 325 (PAFEDRGGTPVTRGSDGRPPY) is disordered. Residue glutamate 374 participates in thiamine diphosphate binding.

The protein belongs to the transketolase family. DXPS subfamily. Homodimer. Mg(2+) is required as a cofactor. The cofactor is thiamine diphosphate.

It catalyses the reaction D-glyceraldehyde 3-phosphate + pyruvate + H(+) = 1-deoxy-D-xylulose 5-phosphate + CO2. The protein operates within metabolic intermediate biosynthesis; 1-deoxy-D-xylulose 5-phosphate biosynthesis; 1-deoxy-D-xylulose 5-phosphate from D-glyceraldehyde 3-phosphate and pyruvate: step 1/1. Its function is as follows. Catalyzes the acyloin condensation reaction between C atoms 2 and 3 of pyruvate and glyceraldehyde 3-phosphate to yield 1-deoxy-D-xylulose-5-phosphate (DXP). The polypeptide is 1-deoxy-D-xylulose-5-phosphate synthase (Rhodopirellula baltica (strain DSM 10527 / NCIMB 13988 / SH1)).